Here is a 428-residue protein sequence, read N- to C-terminus: 3-phosphoshikimate 1-carboxyvinyltransferase (428 aa).

The 3-phosphoshikimate site is built by K20, S21, and R25. K20 lines the phosphoenolpyruvate pocket. Phosphoenolpyruvate is bound by residues G92 and R120. 3-phosphoshikimate is bound by residues S166, Q168, D314, and K341. Q168 provides a ligand contact to phosphoenolpyruvate. Residue D314 is the Proton acceptor of the active site. R345 and R387 together coordinate phosphoenolpyruvate.

It belongs to the EPSP synthase family. As to quaternary structure, monomer.

Its subcellular location is the cytoplasm. The catalysed reaction is 3-phosphoshikimate + phosphoenolpyruvate = 5-O-(1-carboxyvinyl)-3-phosphoshikimate + phosphate. Its pathway is metabolic intermediate biosynthesis; chorismate biosynthesis; chorismate from D-erythrose 4-phosphate and phosphoenolpyruvate: step 6/7. In terms of biological role, catalyzes the transfer of the enolpyruvyl moiety of phosphoenolpyruvate (PEP) to the 5-hydroxyl of shikimate-3-phosphate (S3P) to produce enolpyruvyl shikimate-3-phosphate and inorganic phosphate. The protein is 3-phosphoshikimate 1-carboxyvinyltransferase of Listeria innocua serovar 6a (strain ATCC BAA-680 / CLIP 11262).